A 142-amino-acid polypeptide reads, in one-letter code: Large ribosomal subunit protein uL16 (142 aa).

It belongs to the universal ribosomal protein uL16 family. Part of the 50S ribosomal subunit.

Its function is as follows. Binds 23S rRNA and is also seen to make contacts with the A and possibly P site tRNAs. The sequence is that of Large ribosomal subunit protein uL16 from Mycoplasmopsis pulmonis (strain UAB CTIP) (Mycoplasma pulmonis).